We begin with the raw amino-acid sequence, 405 residues long: L-carnitine CoA-transferase (405 aa).

The CoA site is built by lysine 97 and arginine 104. Aspartate 169 serves as the catalytic Nucleophile.

This sequence belongs to the CoA-transferase III family. CaiB subfamily. In terms of assembly, homodimer.

The protein localises to the cytoplasm. It carries out the reaction crotonobetainyl-CoA + (R)-carnitine = crotonobetaine + (R)-carnitinyl-CoA. The catalysed reaction is 4-(trimethylamino)butanoyl-CoA + (R)-carnitine = (R)-carnitinyl-CoA + 4-(trimethylamino)butanoate. It functions in the pathway amine and polyamine metabolism; carnitine metabolism. Functionally, catalyzes the reversible transfer of the CoA moiety from gamma-butyrobetainyl-CoA to L-carnitine to generate L-carnitinyl-CoA and gamma-butyrobetaine. Is also able to catalyze the reversible transfer of the CoA moiety from gamma-butyrobetainyl-CoA or L-carnitinyl-CoA to crotonobetaine to generate crotonobetainyl-CoA. The sequence is that of L-carnitine CoA-transferase (caiB) from Salmonella typhi.